Reading from the N-terminus, the 191-residue chain is Holliday junction branch migration complex subunit RuvA (191 aa).

The tract at residues 1 to 64 (MIRGVRGTLV…EDELALYGFA (64 aa)) is domain I. The tract at residues 65–136 (TEAELELFLS…ELRGRLPALT (72 aa)) is domain II. The segment at 136–139 (TEVQ) is flexible linker. Residues 140–191 (AGEPIDQELVAALQALGYTAQEARQAATHPEVRRAPSLEERIVAALRQLAPP) form a domain III region.

This sequence belongs to the RuvA family. As to quaternary structure, homotetramer. Forms an RuvA(8)-RuvB(12)-Holliday junction (HJ) complex. HJ DNA is sandwiched between 2 RuvA tetramers; dsDNA enters through RuvA and exits via RuvB. An RuvB hexamer assembles on each DNA strand where it exits the tetramer. Each RuvB hexamer is contacted by two RuvA subunits (via domain III) on 2 adjacent RuvB subunits; this complex drives branch migration. In the full resolvosome a probable DNA-RuvA(4)-RuvB(12)-RuvC(2) complex forms which resolves the HJ.

It localises to the cytoplasm. In terms of biological role, the RuvA-RuvB-RuvC complex processes Holliday junction (HJ) DNA during genetic recombination and DNA repair, while the RuvA-RuvB complex plays an important role in the rescue of blocked DNA replication forks via replication fork reversal (RFR). RuvA specifically binds to HJ cruciform DNA, conferring on it an open structure. The RuvB hexamer acts as an ATP-dependent pump, pulling dsDNA into and through the RuvAB complex. HJ branch migration allows RuvC to scan DNA until it finds its consensus sequence, where it cleaves and resolves the cruciform DNA. This is Holliday junction branch migration complex subunit RuvA from Thermomicrobium roseum (strain ATCC 27502 / DSM 5159 / P-2).